The following is a 498-amino-acid chain: Neoxanthin synthase, chloroplastic (498 aa).

Residues 1–42 constitute a chloroplast transit peptide; it reads METLLKPFPSLLLSSPTPYRSIVQQNPSFLSPTTKKKSRKCL.

It belongs to the lycopene cyclase family. Expressed exclusively in chromoplast-containing tissues of flowers and fruits. Expressed in preanthesis flowers.

Its subcellular location is the plastid. The protein resides in the chloroplast. It catalyses the reaction all-trans-violaxanthin = all-trans-neoxanthin. The catalysed reaction is a carotenoid psi-end group = a carotenoid beta-end derivative. It functions in the pathway carotenoid biosynthesis; neoxanthin biosynthesis. The protein operates within carotenoid biosynthesis; beta-carotene biosynthesis. In terms of biological role, involved in the synthesis of neoxanthin, the last product of carotenoid synthesis and a precursor of abscisic acid. Involved in the beta-carotene biosynthesis. This Solanum lycopersicum (Tomato) protein is Neoxanthin synthase, chloroplastic.